A 512-amino-acid chain; its full sequence is 2-isopropylmalate synthase (512 aa).

The Pyruvate carboxyltransferase domain occupies 4–266 (IEIFDTTLRD…TTKLNLKEIA (263 aa)). Mn(2+) is bound by residues Asp-13, His-201, His-203, and Asn-237. Residues 390–512 (QLESVQLAYG…GEPTPVSATI (123 aa)) are regulatory domain.

It belongs to the alpha-IPM synthase/homocitrate synthase family. LeuA type 1 subfamily. In terms of assembly, homodimer. Requires Mn(2+) as cofactor.

It localises to the cytoplasm. It catalyses the reaction 3-methyl-2-oxobutanoate + acetyl-CoA + H2O = (2S)-2-isopropylmalate + CoA + H(+). Its pathway is amino-acid biosynthesis; L-leucine biosynthesis; L-leucine from 3-methyl-2-oxobutanoate: step 1/4. Its function is as follows. Catalyzes the condensation of the acetyl group of acetyl-CoA with 3-methyl-2-oxobutanoate (2-ketoisovalerate) to form 3-carboxy-3-hydroxy-4-methylpentanoate (2-isopropylmalate). The chain is 2-isopropylmalate synthase from Brevibacillus brevis (strain 47 / JCM 6285 / NBRC 100599).